A 92-amino-acid chain; its full sequence is Small ribosomal subunit protein uS19 (92 aa).

This sequence belongs to the universal ribosomal protein uS19 family.

Functionally, protein S19 forms a complex with S13 that binds strongly to the 16S ribosomal RNA. The polypeptide is Small ribosomal subunit protein uS19 (Geobacillus kaustophilus (strain HTA426)).